Consider the following 191-residue polypeptide: Protein Ves (191 aa).

This sequence belongs to the Ves family.

This is Protein Ves from Escherichia coli (strain SE11).